Here is a 376-residue protein sequence, read N- to C-terminus: Nuclear egress protein 1 (376 aa).

Phosphoserine is present on serine 19. The disordered stretch occupies residues 22 to 57; sequence RKRRQRELASKVASTVNGATSANNHGEPPSPADARP. A compositionally biased stretch (polar residues) spans 33–45; sequence VASTVNGATSANN. The segment at 106–211 adopts a CCCH-type zinc-finger fold; the sequence is CLDISPYGNE…HVIFENPDVH (106 aa). The tract at residues 316 to 376 is disordered; the sequence is VVSTNGCGPS…PLFLNSIRAP (61 aa). Positions 317 to 332 are enriched in polar residues; that stretch reads VSTNGCGPSSSSQSTP.

This sequence belongs to the herpesviridae NEC1 protein family. Forms a heterohexameric complex with NEC2. Interacts with capsid vertex specific component 2/CVC2; this interaction directs the capsid to the host inner nuclear membrane to initiate budding. Phosphorylated at serine residues in the N-terminus. This phosphorylation regulates the localization within the inner nuclear membrane. Phosphorylation by viral kinase UL97 at Ser-19 plays an important role for correct viral nuclear egress complex (NEC) localization.

It is found in the host nucleus inner membrane. Plays an essential role in virion nuclear egress, the first step of virion release from infected cell. Within the host nucleus, NEC1 interacts with the newly formed capsid through the vertexes and directs it to the inner nuclear membrane by associating with NEC2. Induces the budding of the capsid at the inner nuclear membrane as well as its envelopment into the perinuclear space. There, the NEC1/NEC2 complex promotes the fusion of the enveloped capsid with the outer nuclear membrane and the subsequent release of the viral capsid into the cytoplasm where it will reach the secondary budding sites in the host Golgi or trans-Golgi network. The chain is Nuclear egress protein 1 from Homo sapiens (Human).